The following is a 967-amino-acid chain: Nonsense-mediated mRNA decay factor SMG8 (967 aa).

The disordered stretch occupies residues 627–702; sequence LNEGEDADAD…SCPESQSVAS (76 aa). The segment covering 628 to 639 has biased composition (acidic residues); sequence NEGEDADADADS. Over residues 643–666 the composition is skewed to low complexity; the sequence is RSQICSSGQSSRSRSNSSSSDTSS. Residues 686 to 702 show a composition bias toward polar residues; it reads ATEALSESCPESQSVAS.

The protein belongs to the SMG8 family.

Involved in nonsense-mediated decay (NMD) of mRNAs containing premature stop codons. Probable component of kinase complex containing nonC and recruited to stalled ribosomes. This Drosophila mojavensis (Fruit fly) protein is Nonsense-mediated mRNA decay factor SMG8.